A 395-amino-acid polypeptide reads, in one-letter code: RNA pseudouridine synthase 7 (395 aa).

The disordered stretch occupies residues 1–21; it reads MKRKQQEDDNDDGVEKAVSPV. An S4 RNA-binding domain is found at 74–136; it reads KTIVDLFADE…HEPPVMIDDV (63 aa). Aspartate 187 is a catalytic residue. The segment covering 244–255 has biased composition (polar residues); the sequence is EGRSTAEDANSS. Positions 244 to 263 are disordered; it reads EGRSTAEDANSSGDDKKVKG.

Belongs to the pseudouridine synthase RluA family.

It carries out the reaction a uridine in RNA = a pseudouridine in RNA. This Arabidopsis thaliana (Mouse-ear cress) protein is RNA pseudouridine synthase 7.